We begin with the raw amino-acid sequence, 105 residues long: V-type ATP synthase subunit F (105 aa).

Belongs to the V-ATPase F subunit family.

Produces ATP from ADP in the presence of a proton gradient across the membrane. The protein is V-type ATP synthase subunit F of Fusobacterium nucleatum subsp. nucleatum (strain ATCC 25586 / DSM 15643 / BCRC 10681 / CIP 101130 / JCM 8532 / KCTC 2640 / LMG 13131 / VPI 4355).